The following is a 215-amino-acid chain: Ribose-5-phosphate isomerase A (215 aa).

Residues 26-29, 79-82, and 92-95 contribute to the substrate site; these read TGST, DGAD, and KGGG. The Proton acceptor role is filled by E101. K119 lines the substrate pocket.

This sequence belongs to the ribose 5-phosphate isomerase family. In terms of assembly, homodimer.

The enzyme catalyses aldehydo-D-ribose 5-phosphate = D-ribulose 5-phosphate. Its pathway is carbohydrate degradation; pentose phosphate pathway; D-ribose 5-phosphate from D-ribulose 5-phosphate (non-oxidative stage): step 1/1. In terms of biological role, catalyzes the reversible conversion of ribose-5-phosphate to ribulose 5-phosphate. The protein is Ribose-5-phosphate isomerase A of Xylella fastidiosa (strain 9a5c).